The chain runs to 284 residues: NAD kinase (284 aa).

D67 serves as the catalytic Proton acceptor. Residues 67-68, 141-142, R152, K169, D171, 182-187, and Q241 contribute to the NAD(+) site; these read DG, ND, and TGYSLS.

Belongs to the NAD kinase family. Requires a divalent metal cation as cofactor.

It is found in the cytoplasm. The enzyme catalyses NAD(+) + ATP = ADP + NADP(+) + H(+). Its function is as follows. Involved in the regulation of the intracellular balance of NAD and NADP, and is a key enzyme in the biosynthesis of NADP. Catalyzes specifically the phosphorylation on 2'-hydroxyl of the adenosine moiety of NAD to yield NADP. In Geobacter sulfurreducens (strain ATCC 51573 / DSM 12127 / PCA), this protein is NAD kinase.